The primary structure comprises 139 residues: Large ribosomal subunit protein uL14 (139 aa).

The protein belongs to the universal ribosomal protein uL14 family.

In Syntrichia ruralis (Great hairy screw-moss), this protein is Large ribosomal subunit protein uL14 (RPL23).